Here is a 553-residue protein sequence, read N- to C-terminus: Fusion glycoprotein F0 (553 aa).

The N-terminal stretch at Met-1 to Ser-31 is a signal peptide. Residues Ile-32–Ala-500 are Extracellular-facing. Intrachain disulfides connect Cys-76-Cys-199, Cys-338-Cys-347, and Cys-362-Cys-370. A glycan (N-linked (GlcNAc...) asparagine; by host) is linked at Asn-85. A fusion peptide region spans residues Phe-117–Leu-141. Residues Ile-142–Asp-170 are a coiled coil. N-linked (GlcNAc...) asparagine; by host glycosylation occurs at Asn-191. 3 N-linked (GlcNAc...) asparagine; by host glycosylation sites follow: Asn-366, Asn-447, and Asn-471. Residues Glu-466–Val-491 are a coiled coil. The chain crosses the membrane as a helical span at residues Leu-501–Leu-521. The Cytoplasmic portion of the chain corresponds to Ala-522 to Met-553. A lipid anchor (S-palmitoyl cysteine; by host) is attached at Cys-523.

This sequence belongs to the paramyxoviruses fusion glycoprotein family. In terms of assembly, homotrimer of disulfide-linked F1-F2. Post-translationally, the inactive precursor F0 is glycosylated and proteolytically cleaved into F1 and F2 to be functionally active. The cleavage is mediated by cellular proteases during the transport and maturation of the polypeptide.

The protein resides in the virion membrane. It localises to the host cell membrane. Its function is as follows. Class I viral fusion protein. Under the current model, the protein has at least 3 conformational states: pre-fusion native state, pre-hairpin intermediate state, and post-fusion hairpin state. During viral and plasma cell membrane fusion, the heptad repeat (HR) regions assume a trimer-of-hairpins structure, positioning the fusion peptide in close proximity to the C-terminal region of the ectodomain. The formation of this structure appears to drive apposition and subsequent fusion of viral and plasma cell membranes. Directs fusion of viral and cellular membranes leading to delivery of the nucleocapsid into the cytoplasm. This fusion is pH independent and occurs directly at the outer cell membrane. The trimer of F1-F2 (F protein) probably interacts with HN at the virion surface. Upon HN binding to its cellular receptor, the hydrophobic fusion peptide is unmasked and interacts with the cellular membrane, inducing the fusion between cell and virion membranes. Later in infection, F proteins expressed at the plasma membrane of infected cells could mediate fusion with adjacent cells to form syncytia, a cytopathic effect that could lead to tissue necrosis. The sequence is that of Fusion glycoprotein F0 (F) from Gallus gallus (Chicken).